The primary structure comprises 343 residues: Plasminogen (343 aa).

Kringle domains are found at residues 1-17 (APQA…DCML) and 41-120 (AQEP…GCVA). The tract at residues 1–140 (APQAPSVENP…LRRRSREHFC (140 aa)) is plasmin heavy chain A. Cystine bridges form between Cys15/Cys94, Cys36/Cys77, and Cys65/Cys89. A Peptidase S1 domain is found at 114 to 341 (VVGGCVATPH…YVPWIEETMR (228 aa)). A Phosphoserine modification is found at Ser130. Cys140 and Cys156 are oxidised to a cystine. The interval 141 to 343 (GGTLISPEWV…PWIEETMRRY (203 aa)) is plasmin light chain B. Active-site charge relay system residues include His155 and Asp198. Ser221 bears the Phosphoserine mark. 3 disulfide bridges follow: Cys232/Cys299, Cys262/Cys278, and Cys289/Cys317. The active-site Charge relay system is Ser293.

It belongs to the peptidase S1 family. Plasminogen subfamily. In terms of assembly, interacts with CSPG4 and AMOT. Interacts (via the Kringle domains) with HRG; the interaction tethers PLG to the cell surface and enhances its activation. Interacts (via Kringle 4 domain) with ADA; the interaction stimulates PLG activation when in complex with DPP4. Angiostatin: Interacts with ATP5F1A; the interaction inhibits most of the angiogenic effects of angiostatin.

It is found in the secreted. It carries out the reaction Preferential cleavage: Lys-|-Xaa &gt; Arg-|-Xaa, higher selectivity than trypsin. Converts fibrin into soluble products.. Converted into plasmin by plasminogen activators, both plasminogen and its activator being bound to fibrin. Cannot be activated with streptokinase. Functionally, plasmin dissolves the fibrin of blood clots and acts as a proteolytic factor in a variety of other processes including embryonic development, tissue remodeling, tumor invasion, and inflammation. In ovulation, weakens the walls of the Graafian follicle. It activates the urokinase-type plasminogen activator, collagenases and several complement zymogens, such as C1, C4 and C5. Cleavage of fibronectin and laminin leads to cell detachment and apoptosis. Also cleaves fibrin, thrombospondin and von Willebrand factor. Its role in tissue remodeling and tumor invasion may be modulated by CSPG4. Binds to cells. The polypeptide is Plasminogen (PLG) (Ovis aries (Sheep)).